Here is a 425-residue protein sequence, read N- to C-terminus: Glutamyl-tRNA reductase (425 aa).

Substrate is bound by residues 49–52 (TCNR), Ser107, 112–114 (EPQ), and Gln118. Cys50 serves as the catalytic Nucleophile. 187–192 (GAGETI) lines the NADP(+) pocket.

The protein belongs to the glutamyl-tRNA reductase family. In terms of assembly, homodimer.

The enzyme catalyses (S)-4-amino-5-oxopentanoate + tRNA(Glu) + NADP(+) = L-glutamyl-tRNA(Glu) + NADPH + H(+). It participates in porphyrin-containing compound metabolism; protoporphyrin-IX biosynthesis; 5-aminolevulinate from L-glutamyl-tRNA(Glu): step 1/2. In terms of biological role, catalyzes the NADPH-dependent reduction of glutamyl-tRNA(Glu) to glutamate 1-semialdehyde (GSA). In Pseudomonas syringae pv. tomato (strain ATCC BAA-871 / DC3000), this protein is Glutamyl-tRNA reductase.